Here is a 449-residue protein sequence, read N- to C-terminus: Tubulin alpha-1B chain (449 aa).

A GTP-binding site is contributed by Gln11. Lys40 is subject to N6-acetyllysine. GTP-binding residues include Glu71, Ser140, Gly144, Thr145, Thr179, Asn206, and Asn228. Position 71 (Glu71) interacts with Mg(2+). Glu254 is an active-site residue.

It belongs to the tubulin family. In terms of assembly, dimer of alpha and beta chains. A typical microtubule is a hollow water-filled tube with an outer diameter of 25 nm and an inner diameter of 15 nM. Alpha-beta heterodimers associate head-to-tail to form protofilaments running lengthwise along the microtubule wall with the beta-tubulin subunit facing the microtubule plus end conferring a structural polarity. Microtubules usually have 13 protofilaments but different protofilament numbers can be found in some organisms and specialized cells. It depends on Mg(2+) as a cofactor. Acetylation of alpha chains at Lys-40 stabilizes microtubules and affects affinity and processivity of microtubule motors. This modification has a role in multiple cellular functions, ranging from cell motility, cell cycle progression or cell differentiation to intracellular trafficking and signaling.

The protein localises to the cytoplasm. It is found in the cytoskeleton. Its subcellular location is the spindle. It localises to the nucleus. The enzyme catalyses GTP + H2O = GDP + phosphate + H(+). Its function is as follows. Tubulin is the major constituent of microtubules, a cylinder consisting of laterally associated linear protofilaments composed of alpha- and beta-tubulin heterodimers. Microtubules grow by the addition of GTP-tubulin dimers to the microtubule end, where a stabilizing cap forms. Below the cap, tubulin dimers are in GDP-bound state, owing to GTPase activity of alpha-tubulin. The chain is Tubulin alpha-1B chain (ALTBN) from Physarum polycephalum (Slime mold).